Reading from the N-terminus, the 332-residue chain is Holliday junction branch migration complex subunit RuvB (332 aa).

A large ATPase domain (RuvB-L) region spans residues 1-181; sequence MSRILDNEIM…FGITGHMEYY (181 aa). Residues Leu-20, Arg-21, Gly-62, Lys-65, Thr-66, Thr-67, 128-130, Arg-171, Tyr-181, and Arg-218 each bind ATP; that span reads EDF. Thr-66 contacts Mg(2+). A small ATPAse domain (RuvB-S) region spans residues 182 to 252; sequence AHADLTEIVE…ITDKALTMLD (71 aa). Positions 255-332 are head domain (RuvB-H); the sequence is HEGLDYVDQK…EHLGYEYSEK (78 aa). Residues Arg-291, Arg-310, Arg-312, and Arg-315 each contribute to the DNA site.

It belongs to the RuvB family. Homohexamer. Forms an RuvA(8)-RuvB(12)-Holliday junction (HJ) complex. HJ DNA is sandwiched between 2 RuvA tetramers; dsDNA enters through RuvA and exits via RuvB. An RuvB hexamer assembles on each DNA strand where it exits the tetramer. Each RuvB hexamer is contacted by two RuvA subunits (via domain III) on 2 adjacent RuvB subunits; this complex drives branch migration. In the full resolvosome a probable DNA-RuvA(4)-RuvB(12)-RuvC(2) complex forms which resolves the HJ.

It localises to the cytoplasm. It catalyses the reaction ATP + H2O = ADP + phosphate + H(+). In terms of biological role, the RuvA-RuvB-RuvC complex processes Holliday junction (HJ) DNA during genetic recombination and DNA repair, while the RuvA-RuvB complex plays an important role in the rescue of blocked DNA replication forks via replication fork reversal (RFR). RuvA specifically binds to HJ cruciform DNA, conferring on it an open structure. The RuvB hexamer acts as an ATP-dependent pump, pulling dsDNA into and through the RuvAB complex. RuvB forms 2 homohexamers on either side of HJ DNA bound by 1 or 2 RuvA tetramers; 4 subunits per hexamer contact DNA at a time. Coordinated motions by a converter formed by DNA-disengaged RuvB subunits stimulates ATP hydrolysis and nucleotide exchange. Immobilization of the converter enables RuvB to convert the ATP-contained energy into a lever motion, pulling 2 nucleotides of DNA out of the RuvA tetramer per ATP hydrolyzed, thus driving DNA branch migration. The RuvB motors rotate together with the DNA substrate, which together with the progressing nucleotide cycle form the mechanistic basis for DNA recombination by continuous HJ branch migration. Branch migration allows RuvC to scan DNA until it finds its consensus sequence, where it cleaves and resolves cruciform DNA. The polypeptide is Holliday junction branch migration complex subunit RuvB (Streptococcus pneumoniae serotype 2 (strain D39 / NCTC 7466)).